The primary structure comprises 200 residues: Large ribosomal subunit protein uL4 (200 aa).

The disordered stretch occupies residues 38 to 72 (GRQGSKQQKTRSDVSGGGKRPWRQKGTGRARAGTI).

The protein belongs to the universal ribosomal protein uL4 family. Part of the 50S ribosomal subunit.

Functionally, one of the primary rRNA binding proteins, this protein initially binds near the 5'-end of the 23S rRNA. It is important during the early stages of 50S assembly. It makes multiple contacts with different domains of the 23S rRNA in the assembled 50S subunit and ribosome. In terms of biological role, forms part of the polypeptide exit tunnel. In Pseudomonas fluorescens (strain ATCC BAA-477 / NRRL B-23932 / Pf-5), this protein is Large ribosomal subunit protein uL4.